A 149-amino-acid chain; its full sequence is Nucleoside diphosphate kinase (149 aa).

The ATP site is built by lysine 9, phenylalanine 57, arginine 85, threonine 91, arginine 102, and asparagine 112. Histidine 115 acts as the Pros-phosphohistidine intermediate in catalysis.

The protein belongs to the NDK family. Homotetramer. It depends on Mg(2+) as a cofactor.

The protein resides in the cytoplasm. It catalyses the reaction a 2'-deoxyribonucleoside 5'-diphosphate + ATP = a 2'-deoxyribonucleoside 5'-triphosphate + ADP. It carries out the reaction a ribonucleoside 5'-diphosphate + ATP = a ribonucleoside 5'-triphosphate + ADP. In terms of biological role, major role in the synthesis of nucleoside triphosphates other than ATP. The ATP gamma phosphate is transferred to the NDP beta phosphate via a ping-pong mechanism, using a phosphorylated active-site intermediate. The chain is Nucleoside diphosphate kinase from Synechocystis sp. (strain ATCC 27184 / PCC 6803 / Kazusa).